Here is a 361-residue protein sequence, read N- to C-terminus: Phosphoserine aminotransferase (361 aa).

Arg43 is a binding site for L-glutamate. Residues 77–78 (AS), Trp103, Thr153, Asp173, and Gln196 each bind pyridoxal 5'-phosphate. N6-(pyridoxal phosphate)lysine is present on Lys197. 238–239 (NT) provides a ligand contact to pyridoxal 5'-phosphate.

This sequence belongs to the class-V pyridoxal-phosphate-dependent aminotransferase family. SerC subfamily. In terms of assembly, homodimer. It depends on pyridoxal 5'-phosphate as a cofactor.

It localises to the cytoplasm. The catalysed reaction is O-phospho-L-serine + 2-oxoglutarate = 3-phosphooxypyruvate + L-glutamate. The enzyme catalyses 4-(phosphooxy)-L-threonine + 2-oxoglutarate = (R)-3-hydroxy-2-oxo-4-phosphooxybutanoate + L-glutamate. Its pathway is amino-acid biosynthesis; L-serine biosynthesis; L-serine from 3-phospho-D-glycerate: step 2/3. It participates in cofactor biosynthesis; pyridoxine 5'-phosphate biosynthesis; pyridoxine 5'-phosphate from D-erythrose 4-phosphate: step 3/5. In terms of biological role, catalyzes the reversible conversion of 3-phosphohydroxypyruvate to phosphoserine and of 3-hydroxy-2-oxo-4-phosphonooxybutanoate to phosphohydroxythreonine. This chain is Phosphoserine aminotransferase, found in Pseudomonas aeruginosa (strain ATCC 15692 / DSM 22644 / CIP 104116 / JCM 14847 / LMG 12228 / 1C / PRS 101 / PAO1).